Here is a 132-residue protein sequence, read N- to C-terminus: UPF0047 protein YugU (132 aa).

Belongs to the UPF0047 family.

The sequence is that of UPF0047 protein YugU (yugU) from Bacillus subtilis (strain 168).